A 1481-amino-acid polypeptide reads, in one-letter code: ABC multidrug transporter atrH (1481 aa).

Positions 1–10 (MALPREERSL) are enriched in basic and acidic residues. Disordered stretches follow at residues 1 to 45 (MALP…GIEQ) and 61 to 89 (ISQTNSGTEGLNPFLNTSDPELDPNSDQF). N-linked (GlcNAc...) asparagine glycosylation is found at Asn19, Asn76, and Asn320. Positions 134–396 (ATVSNVWLKA…FIEMGFDCPE (263 aa)) constitute an ABC transporter 1 domain. The helical transmembrane segment at 507–527 (MTLSTVIGNSILALIISSVFY) threads the bilayer. An N-linked (GlcNAc...) asparagine glycan is attached at Asn530. Helical transmembrane passes span 542-562 (LLFFAILLNAFASALEMLTLW), 587-607 (LIVDLPAKAPVSIVFNLILYF), 616-636 (GHFFVFYLFSVTTTLTMSNVF), 650-670 (EVPASIFMMILMIYTGFTIPV), and 758-778 (FGILLGFLFFSLVAYIVASEL). In terms of domain architecture, ABC transporter 2 spans 838 to 1081 (FHWQDVCYDI…LIKYFEDKGS (244 aa)). 874–881 (GVTGAGKT) serves as a coordination point for ATP. Helical transmembrane passes span 1174-1194 (YIYAKAAMCIIPPLFIGFTFW), 1210-1230 (IFMLLVIFPNLVQQMMPYFAM), 1249-1269 (AFMLASIVVELPWNMLMAVPA), 1298-1318 (LLVLIFMLFTSTFSSMMIAGI), 1327-1347 (IAQLMFSMCLIFCGVLASPDV), and 1358-1378 (ASPFSYLVGSVLAVGIAGAPV). N-linked (GlcNAc...) asparagine glycosylation is present at Asn1395. Residues 1446-1466 (VGILFVYIVFNTVAAVFLYWL) form a helical membrane-spanning segment.

The protein belongs to the ABC transporter superfamily. ABCG family. PDR (TC 3.A.1.205) subfamily.

The protein localises to the cell membrane. Pleiotropic ABC efflux transporter involved in the basal level of azole susceptibility. The polypeptide is ABC multidrug transporter atrH (Aspergillus oryzae (strain ATCC 42149 / RIB 40) (Yellow koji mold)).